Here is a 134-residue protein sequence, read N- to C-terminus: Loki profilin-1 (134 aa).

The loki loop stretch occupies residues 55 to 62 (LALGKKGI).

The protein belongs to the Asgard profilin family.

Its subcellular location is the cytoplasm. The protein resides in the cytoskeleton. With respect to regulation, inhibition of rabbit actin polymerization is reduced by phosphatidylinositol-(4,5)-P2(1,2-dipalmitoyl), a soluble form of the phospholipid phosphatidylinositol, suggesting an unknown lipid might regulate actin-profilin interaction in vivo. In terms of biological role, binds to actin and affects the structure of the cytoskeleton. At high concentrations inhibits spontaneous rabbit actin nucleation. This strongly suggests this archaea has a profilin-regulated actin system, and actin-type genes can be identified in this organism. In Lokiarchaeum sp. (strain GC14_75), this protein is Loki profilin-1.